Here is a 186-residue protein sequence, read N- to C-terminus: uncharacterized protein (186 aa).

This is an uncharacterized protein from Mycoplasma genitalium (strain ATCC 33530 / DSM 19775 / NCTC 10195 / G37) (Mycoplasmoides genitalium).